The primary structure comprises 104 residues: Flagellar hook-basal body complex protein FliE (104 aa).

It belongs to the FliE family.

It localises to the bacterial flagellum basal body. The polypeptide is Flagellar hook-basal body complex protein FliE (Escherichia coli O139:H28 (strain E24377A / ETEC)).